Reading from the N-terminus, the 159-residue chain is Ribosomal RNA large subunit methyltransferase H (159 aa).

S-adenosyl-L-methionine contacts are provided by residues Gly-108 and 127–132 (FGKLTM).

The protein belongs to the RNA methyltransferase RlmH family. As to quaternary structure, homodimer.

It localises to the cytoplasm. It carries out the reaction pseudouridine(1915) in 23S rRNA + S-adenosyl-L-methionine = N(3)-methylpseudouridine(1915) in 23S rRNA + S-adenosyl-L-homocysteine + H(+). Specifically methylates the pseudouridine at position 1915 (m3Psi1915) in 23S rRNA. The chain is Ribosomal RNA large subunit methyltransferase H from Lactobacillus helveticus (strain DPC 4571).